A 174-amino-acid chain; its full sequence is Protein GrpE (174 aa).

This sequence belongs to the GrpE family. Homodimer.

It is found in the cytoplasm. Participates actively in the response to hyperosmotic and heat shock by preventing the aggregation of stress-denatured proteins, in association with DnaK and GrpE. It is the nucleotide exchange factor for DnaK and may function as a thermosensor. Unfolded proteins bind initially to DnaJ; upon interaction with the DnaJ-bound protein, DnaK hydrolyzes its bound ATP, resulting in the formation of a stable complex. GrpE releases ADP from DnaK; ATP binding to DnaK triggers the release of the substrate protein, thus completing the reaction cycle. Several rounds of ATP-dependent interactions between DnaJ, DnaK and GrpE are required for fully efficient folding. The protein is Protein GrpE of Methanothermobacter thermautotrophicus (strain ATCC 29096 / DSM 1053 / JCM 10044 / NBRC 100330 / Delta H) (Methanobacterium thermoautotrophicum).